The primary structure comprises 295 residues: Elongation factor Ts (295 aa).

An involved in Mg(2+) ion dislocation from EF-Tu region spans residues 79-82 (TDFV).

The protein belongs to the EF-Ts family.

Its subcellular location is the cytoplasm. Functionally, associates with the EF-Tu.GDP complex and induces the exchange of GDP to GTP. It remains bound to the aminoacyl-tRNA.EF-Tu.GTP complex up to the GTP hydrolysis stage on the ribosome. This Bacillus cereus (strain G9842) protein is Elongation factor Ts.